Here is a 100-residue protein sequence, read N- to C-terminus: Small ribosomal subunit protein bS21 (100 aa).

The segment at 61–100 (KLQREGLLPMKPKPVFGAGPGGDRGRGPAAGAGAGPRGPR) is disordered. Gly residues predominate over residues 78–100 (AGPGGDRGRGPAAGAGAGPRGPR).

This sequence belongs to the bacterial ribosomal protein bS21 family.

The protein is Small ribosomal subunit protein bS21 of Rhodopseudomonas palustris (strain BisB18).